Reading from the N-terminus, the 396-residue chain is Protein RepA (396 aa).

2 disordered regions span residues 141 to 170 (SKELGKTGGRPRKKDSEEEPEKKPEEVTKK) and 356 to 396 (NQYK…LPTT). Over residues 154–168 (KDSEEEPEKKPEEVT) the composition is skewed to basic and acidic residues.

The protein is Protein RepA (repA) of Bacillus subtilis.